A 62-amino-acid polypeptide reads, in one-letter code: Coiled-coil domain-containing protein YLR146W-A (62 aa).

Residues 14–49 (EHARMLQNEIQQLFAQLRDTNSQIRCDLNEFEQIKE) adopt a coiled-coil conformation.

The sequence is that of Coiled-coil domain-containing protein YLR146W-A from Saccharomyces cerevisiae (strain ATCC 204508 / S288c) (Baker's yeast).